A 284-amino-acid chain; its full sequence is Homeobox protein Hox-D13 (284 aa).

The homeobox DNA-binding region spans 217-276 (GRKKRVPYTKTQLKELEREYATNKFITKEKRRRISTATNLTERQVTIWFQNRRVKEKKVV).

Belongs to the Abd-B homeobox family.

It localises to the nucleus. In terms of biological role, sequence-specific transcription factor that binds gene promoters and activates their transcription. Part of a developmental regulatory system that provides cells with specific positional identities on the anterior-posterior axis. The chain is Homeobox protein Hox-D13 (HOXD13) from Heterodontus francisci (Horn shark).